Consider the following 426-residue polypeptide: MTYFIDRRANAKNKSAVNRQRFLQRYRSHIKRAVEEAVNRRSITDMERGEKISIPAKDISEPVFQHGPGGARTIVSPGNKEFVEGDRLRRPGGEGRGGSGEGSASNQGEGMDEFAFSLSREEFLDFVFDGLALPHLERKQLRDLDEVRPVRAGVTRDGVPSRINIVRSMREAQARRIGMRAPIKRALREAEEALESEERKDPVLRNPARIGELKAEIERLEKRLEAVPFIDTYDLRYNNLIDQPQPSNKAVMFCVMDVSGSMTQGHKDIAKRFFLLLYLFLERNYEKVELVFIRHHTAAKEVDEEEFFYSRETGGTIVSSALTLVDEIIAKRYSPAQWNLYVAQASDGDNWDDDSLTCRDLLMTSLMAKLQYYTYVEITPHSHQALWEEYERVQAAHPSRFAMQQIVEPGDIYPVFRKLFRKRVAS.

Over residues 82-93 (FVEGDRLRRPGG) the composition is skewed to basic and acidic residues. A disordered region spans residues 82 to 109 (FVEGDRLRRPGGEGRGGSGEGSASNQGE).

This sequence belongs to the UPF0229 family.

The polypeptide is UPF0229 protein Csal_0882 (Chromohalobacter salexigens (strain ATCC BAA-138 / DSM 3043 / CIP 106854 / NCIMB 13768 / 1H11)).